Reading from the N-terminus, the 225-residue chain is Uracil-DNA glycosylase (225 aa).

D65 acts as the Proton acceptor in catalysis.

Belongs to the uracil-DNA glycosylase (UDG) superfamily. UNG family.

The protein resides in the cytoplasm. It catalyses the reaction Hydrolyzes single-stranded DNA or mismatched double-stranded DNA and polynucleotides, releasing free uracil.. In terms of biological role, excises uracil residues from the DNA which can arise as a result of misincorporation of dUMP residues by DNA polymerase or due to deamination of cytosine. The chain is Uracil-DNA glycosylase from Anoxybacillus flavithermus (strain DSM 21510 / WK1).